The chain runs to 241 residues: Protein-L-isoaspartate O-methyltransferase (241 aa).

The active site involves serine 69.

This sequence belongs to the methyltransferase superfamily. L-isoaspartyl/D-aspartyl protein methyltransferase family.

Its subcellular location is the cytoplasm. The catalysed reaction is [protein]-L-isoaspartate + S-adenosyl-L-methionine = [protein]-L-isoaspartate alpha-methyl ester + S-adenosyl-L-homocysteine. Its function is as follows. Catalyzes the methyl esterification of L-isoaspartyl residues in peptides and proteins that result from spontaneous decomposition of normal L-aspartyl and L-asparaginyl residues. It plays a role in the repair and/or degradation of damaged proteins. The protein is Protein-L-isoaspartate O-methyltransferase of Hyperthermus butylicus (strain DSM 5456 / JCM 9403 / PLM1-5).